The following is a 678-amino-acid chain: Vacuolar fusion protein mon1 (678 aa).

Disordered regions lie at residues 1 to 116 (MDRD…YTSP), 449 to 474 (EENN…VTSP), and 568 to 591 (FETS…KTTE). A compositionally biased stretch (low complexity) spans 10–20 (NDGTNDNNDTT). Over residues 63-77 (RPTTQVSTIDISTLS) the composition is skewed to polar residues. Residues 87 to 105 (STSATSATSATSATRSVAS) are compositionally biased toward low complexity. A compositionally biased stretch (polar residues) spans 106-116 (PQSSASGYTSP). Positions 450–459 (ENNSNNTNNP) are enriched in low complexity. Pro residues predominate over residues 460–471 (EQPPQPPPPKPV).

It belongs to the MON1/SAND family.

Its subcellular location is the endosome. The protein localises to the multivesicular body membrane. It is found in the prevacuolar compartment membrane. It localises to the vacuole membrane. Functionally, in complex with CCZ1, is required for multiple vacuole delivery pathways including the cytoplasm to vacuole transport (Cvt), autophagy, pexophagy and endocytosis. The MON1-CCZ1 complex acts at the fusion of vesicles with the vacuole, through its regulation of the SNARE complex during the coordinated priming and docking stages of fusion, and particularly at the stage of tethering/docking. This Neurospora crassa (strain ATCC 24698 / 74-OR23-1A / CBS 708.71 / DSM 1257 / FGSC 987) protein is Vacuolar fusion protein mon1 (apg-13).